Consider the following 242-residue polypeptide: uncharacterized protein (242 aa).

To E.coli MazG and to plasmid pIP1100 erythromycin esterase.

This is an uncharacterized protein from Streptomyces cacaoi.